A 243-amino-acid polypeptide reads, in one-letter code: Outer membrane protein A (243 aa).

The next 5 membrane-spanning stretches (beta stranded) occupy residues 1-8, 13-21, 48-57, 62-69, and 88-96; these read LAAKLSYP, LDIYTRLGG, PLAAVGVEYA, WATRLDYQ, and MLSLGVSYR. 5 repeat units span residues 104 to 105, 106 to 107, 108 to 109, 110 to 111, and 112 to 113. Positions 104–113 are 5 X 2 AA tandem repeats of A-P; it reads APAPAPAPAP. The OmpA-like domain occupies 115 to 243; sequence VETKLFTLKS…RRVEIEVKGI (129 aa). A disulfide bridge connects residues Cys215 and Cys229.

It belongs to the outer membrane OOP (TC 1.B.6) superfamily. OmpA family. As to quaternary structure, monomer and homodimer.

Its subcellular location is the cell outer membrane. With TolR probably plays a role in maintaining the position of the peptidoglycan cell wall in the periplasm. Acts as a porin with low permeability that allows slow penetration of small solutes; an internal gate slows down solute passage. The chain is Outer membrane protein A from Serratia odorifera.